The primary structure comprises 569 residues: Sulfite reductase [NADPH] hemoprotein beta-component (569 aa).

[4Fe-4S] cluster is bound by residues Cys-433, Cys-439, Cys-478, and Cys-482. Cys-482 is a siroheme binding site.

The protein belongs to the nitrite and sulfite reductase 4Fe-4S domain family. As to quaternary structure, alpha(8)-beta(8). The alpha component is a flavoprotein, the beta component is a hemoprotein. Requires siroheme as cofactor. It depends on [4Fe-4S] cluster as a cofactor.

The enzyme catalyses hydrogen sulfide + 3 NADP(+) + 3 H2O = sulfite + 3 NADPH + 4 H(+). The protein operates within sulfur metabolism; hydrogen sulfide biosynthesis; hydrogen sulfide from sulfite (NADPH route): step 1/1. In terms of biological role, component of the sulfite reductase complex that catalyzes the 6-electron reduction of sulfite to sulfide. This is one of several activities required for the biosynthesis of L-cysteine from sulfate. In Blochmanniella floridana, this protein is Sulfite reductase [NADPH] hemoprotein beta-component.